A 651-amino-acid polypeptide reads, in one-letter code: L-type lectin-domain containing receptor kinase IX.1 (651 aa).

The N-terminal stretch at 1-19 is a signal peptide; that stretch reads MANSILLFSFVLVLPFVCS. The interval 20-251 is legume-lectin like; sequence VQFNISRFGS…GNRLLSWEFS (232 aa). The Extracellular segment spans residues 20-269; that stretch reads VQFNISRFGS…KKSQNDKKGM (250 aa). N-linked (GlcNAc...) asparagine glycosylation is found at N23, N125, N129, N162, N169, N174, N195, and N211. The helical transmembrane segment at 270–290 threads the bilayer; it reads IIGISVSGFVLLTFFITSLIV. Over 291 to 651 the chain is Cytoplasmic; sequence FLKRKQQKKK…VTFSSAQHGR (361 aa). Residues 335-616 form the Protein kinase domain; it reads FADDRKLGEG…LNLEAPVPHL (282 aa). ATP is bound by residues 341–349 and K364; that span reads LGEGGFGAV. Residue D459 is the Proton acceptor of the active site. Residues 630-651 are disordered; that stretch reads SNTTSVSSGGATVTFSSAQHGR.

This sequence in the C-terminal section; belongs to the protein kinase superfamily. Ser/Thr protein kinase family. It in the N-terminal section; belongs to the leguminous lectin family. As to quaternary structure, interacts with ABCG40.

Its subcellular location is the cell membrane. The enzyme catalyses L-seryl-[protein] + ATP = O-phospho-L-seryl-[protein] + ADP + H(+). It catalyses the reaction L-threonyl-[protein] + ATP = O-phospho-L-threonyl-[protein] + ADP + H(+). Functionally, promotes hydrogen peroxide H(2)O(2) production and cell death. Involved in resistance response to the pathogenic oomycetes Phytophthora infestans and Phytophthora capsici. The sequence is that of L-type lectin-domain containing receptor kinase IX.1 from Arabidopsis thaliana (Mouse-ear cress).